The following is a 323-amino-acid chain: Putative CDC123-like protein L884 (323 aa).

Belongs to the CDC123 family.

This is Putative CDC123-like protein L884 from Acanthamoeba polyphaga mimivirus (APMV).